The chain runs to 340 residues: Sodium/bile acid cotransporter 7 (340 aa).

Residues 1–10 (MRLLERVRKE) are Cytoplasmic-facing. Residues 11 to 31 (WFMVGIVVAIGAAKLEPSVGV) traverse the membrane as a helical segment. Topologically, residues 32–37 (NGGPLK) are extracellular. A helical membrane pass occupies residues 38-58 (PEITVSYIAVATIFFNSGLSL). The Cytoplasmic portion of the chain corresponds to 59-71 (KTEELTSALVHLK). A helical transmembrane segment spans residues 72–92 (LHLFIQVFTLAFFPTTIWLFL). At 93–116 (QLLSVTSINEWLLKGLQTVGCMPP) the chain is on the extracellular side. The helical transmembrane segment at 117–137 (PVSSAVILTKAVGGNEAAAIF) threads the bilayer. A topological domain (cytoplasmic) is located at residue N138. Residues 139–159 (SAFGSFLGIVVTPVLLLLFLG) traverse the membrane as a helical segment. The Extracellular portion of the chain corresponds to 160–163 (SSSS). A helical membrane pass occupies residues 164-184 (VPFTSIFSQLFMTVVVPLVIG). The Cytoplasmic segment spans residues 185–201 (QIVRRYIKDWLERKKPP). A helical membrane pass occupies residues 202-222 (FGVVSSSVLLMIIYTTFCDTF). Topologically, residues 223–234 (SNPNIDLDKFSL) are extracellular. Residues 235 to 255 (ILILFIIVSIQLSFMLLTFVF) form a helical membrane-spanning segment. Over 256-270 (STRNNSGFTPADTVA) the chain is Cytoplasmic. A helical transmembrane segment spans residues 271-291 (IIFCSTHKSLTLGIPMLKIVF). The Extracellular segment spans residues 292–298 (AGHEHLS). The chain crosses the membrane as a helical span at residues 299–319 (LISLPLLIYHPAQILLGSVLV). The Cytoplasmic portion of the chain corresponds to 320 to 340 (PTIKSWMVSRQKGVKLTRPTV).

The protein belongs to the bile acid:sodium symporter (BASS) (TC 2.A.28) family. As to expression, strongly expressed in liver, adrenal gland, small intestine and colon. Moderately expressed in heart, lung, kidney and spleen. Weakly expressed in brain.

The protein localises to the cell membrane. The protein resides in the endoplasmic reticulum membrane. Its subcellular location is the golgi apparatus membrane. Involved in teeth and skeletal development. Has an essential role in the biosynthesis and trafficking of glycosaminoglycans and glycoproteins to produce a proper functioning extracellular matrix. Required for extracellular matrix mineralization. Also involved in the regulation of cellular calcium homeostasis. Does not show transport activity towards bile acids or steroid sulfates (including taurocholate, cholate, chenodeoxycholate, estrone-3-sulfate, dehydroepiandrosterone sulfate (DHEAS) and pregnenolone sulfate). The chain is Sodium/bile acid cotransporter 7 (Slc10a7) from Rattus norvegicus (Rat).